A 683-amino-acid polypeptide reads, in one-letter code: DNA-directed RNA polymerase subunit beta' (683 aa).

The Zn(2+) site is built by Cys69, Cys71, Cys87, and Cys90. The Mg(2+) site is built by Asp492, Asp494, and Asp496.

The protein belongs to the RNA polymerase beta' chain family. RpoC1 subfamily. As to quaternary structure, in plastids the minimal PEP RNA polymerase catalytic core is composed of four subunits: alpha, beta, beta', and beta''. When a (nuclear-encoded) sigma factor is associated with the core the holoenzyme is formed, which can initiate transcription. The cofactor is Mg(2+). It depends on Zn(2+) as a cofactor.

It localises to the plastid. The protein resides in the chloroplast. It catalyses the reaction RNA(n) + a ribonucleoside 5'-triphosphate = RNA(n+1) + diphosphate. In terms of biological role, DNA-dependent RNA polymerase catalyzes the transcription of DNA into RNA using the four ribonucleoside triphosphates as substrates. The polypeptide is DNA-directed RNA polymerase subunit beta' (Coffea arabica (Arabian coffee)).